We begin with the raw amino-acid sequence, 110 residues long: Integration host factor subunit alpha (110 aa).

The protein belongs to the bacterial histone-like protein family. As to quaternary structure, heterodimer of an alpha and a beta chain.

Functionally, this protein is one of the two subunits of integration host factor, a specific DNA-binding protein that functions in genetic recombination as well as in transcriptional and translational control. In Methylococcus capsulatus (strain ATCC 33009 / NCIMB 11132 / Bath), this protein is Integration host factor subunit alpha.